The chain runs to 143 residues: MARHFGMALAPWDVMGGGRFQSKKAMEERRKNGECIRSFVGASEQTDAEIKISEALAKVAEEHGTESVTAIAIAYVRSKAKNVFPSVEGGKIEDLKENIKALSIDLTPDNIKYLENVVPFDIGFPNTFIVLNSLTQKYGTNNV.

It belongs to the aldo/keto reductase family. Aldo/keto reductase 2 subfamily.

In terms of biological role, putative aryl-alcohol dehydrogenase. The chain is Putative aryl-alcohol dehydrogenase AAD15 (AAD15) from Saccharomyces cerevisiae (strain ATCC 204508 / S288c) (Baker's yeast).